The chain runs to 141 residues: Large ribosomal subunit protein uL11 (141 aa).

The protein belongs to the universal ribosomal protein uL11 family. As to quaternary structure, part of the ribosomal stalk of the 50S ribosomal subunit. Interacts with L10 and the large rRNA to form the base of the stalk. L10 forms an elongated spine to which L12 dimers bind in a sequential fashion forming a multimeric L10(L12)X complex. One or more lysine residues are methylated.

Functionally, forms part of the ribosomal stalk which helps the ribosome interact with GTP-bound translation factors. The sequence is that of Large ribosomal subunit protein uL11 from Streptococcus agalactiae serotype Ia (strain ATCC 27591 / A909 / CDC SS700).